A 231-amino-acid chain; its full sequence is 5'-methylthioadenosine/S-adenosylhomocysteine nucleosidase (231 aa).

Glu13 functions as the Proton acceptor in the catalytic mechanism. Substrate-binding positions include Gly79, Met154, and 175–176 (ME). Asp199 serves as the catalytic Proton donor.

Belongs to the PNP/UDP phosphorylase family. MtnN subfamily.

The catalysed reaction is S-adenosyl-L-homocysteine + H2O = S-(5-deoxy-D-ribos-5-yl)-L-homocysteine + adenine. It catalyses the reaction S-methyl-5'-thioadenosine + H2O = 5-(methylsulfanyl)-D-ribose + adenine. The enzyme catalyses 5'-deoxyadenosine + H2O = 5-deoxy-D-ribose + adenine. It functions in the pathway amino-acid biosynthesis; L-methionine biosynthesis via salvage pathway; S-methyl-5-thio-alpha-D-ribose 1-phosphate from S-methyl-5'-thioadenosine (hydrolase route): step 1/2. In terms of biological role, catalyzes the irreversible cleavage of the glycosidic bond in both 5'-methylthioadenosine (MTA) and S-adenosylhomocysteine (SAH/AdoHcy) to adenine and the corresponding thioribose, 5'-methylthioribose and S-ribosylhomocysteine, respectively. Also cleaves 5'-deoxyadenosine, a toxic by-product of radical S-adenosylmethionine (SAM) enzymes, into 5-deoxyribose and adenine. In Marinomonas sp. (strain MWYL1), this protein is 5'-methylthioadenosine/S-adenosylhomocysteine nucleosidase.